Reading from the N-terminus, the 179-residue chain is Exosome complex component Csl4 (179 aa).

An S1 motif domain is found at 58–137 (GDVVLGRVVD…RLSTKEEEMG (80 aa)). Positions 143, 146, 159, and 162 each coordinate Zn(2+).

Belongs to the CSL4 family. Component of the archaeal exosome complex. Forms a trimer of Rrp4 and/or Csl4 subunits. The trimer associates with a hexameric ring-like arrangement composed of 3 Rrp41-Rrp42 heterodimers. Interacts with DnaG.

The protein resides in the cytoplasm. In terms of biological role, non-catalytic component of the exosome, which is a complex involved in RNA degradation. Increases the RNA binding and the efficiency of RNA degradation. Helpful for the interaction of the exosome with A-poor RNAs. The sequence is that of Exosome complex component Csl4 from Archaeoglobus fulgidus (strain ATCC 49558 / DSM 4304 / JCM 9628 / NBRC 100126 / VC-16).